The chain runs to 1149 residues: Protogenin A (1149 aa).

The first 23 residues, 1–23 (MASFKRDLYLFLAVFLSISGVWS), serve as a signal peptide directing secretion. The Extracellular portion of the chain corresponds to 24 to 932 (FSELFFIKEP…GFYHLDQRSM (909 aa)). 4 consecutive Ig-like domains span residues 27–117 (LFFI…ARLT), 122–209 (STFT…ATLT), 222–309 (PRII…ANIT), and 314–399 (PSLV…RLIV). 2 disulfide bridges follow: C48–C100 and C143–C192. A glycan (N-linked (GlcNAc...) asparagine) is linked at N78. Residue N230 is glycosylated (N-linked (GlcNAc...) asparagine). C243 and C291 are joined by a disulfide. Residues N300 and N307 are each glycosylated (N-linked (GlcNAc...) asparagine). C335 and C382 are oxidised to a cystine. 5 Fibronectin type-III domains span residues 408-502 (APRN…TLED), 504-600 (PLRA…TPKA), 605-704 (VPLA…VRDR), 711-804 (PPHH…TLPE), and 809-905 (APVG…IHTD). N460 and N475 each carry an N-linked (GlcNAc...) asparagine glycan. A glycan (N-linked (GlcNAc...) asparagine) is linked at N617. Positions 646–666 (GQSEAAQAQIPPHHRQHTIGG) are disordered. 3 N-linked (GlcNAc...) asparagine glycosylation sites follow: N720, N741, and N753. The chain crosses the membrane as a helical span at residues 933–953 (AGIAVGVCIALTCIIICILIL). Topologically, residues 954-1149 (ACRSKTRKSC…EQEMTDLHPV (196 aa)) are cytoplasmic. A disordered region spans residues 1060-1149 (YTETSPENPP…EQEMTDLHPV (90 aa)). The segment covering 1061-1073 (TETSPENPPTTLQ) has biased composition (polar residues). Over residues 1084-1106 (EGSHSSEGSHETSDSGRYSHDDT) the composition is skewed to basic and acidic residues.

This sequence belongs to the immunoglobulin superfamily. DCC family. In terms of tissue distribution, expression begins in the posterior region of the embryo and this posterior restriction persists at the 4 s stage. At early somite stages, expressed along the neural tube with lower levels in the lateral and paraxial mesoderm. Expression decreases caudally and rostrally becomes restricted to the ventral part of the brain. Widespread in the spinal cord at 30 hours post-fertilization (hpf) and is also expressed in the lens from this time. At 40 hpf, expression is restricted to the lens.

It is found in the membrane. Its function is as follows. May play a role in anteroposterior axis elongation. This Danio rerio (Zebrafish) protein is Protogenin A.